The primary structure comprises 175 residues: MALREIIIIPDKQLRLISKPVETVSAEVRRLADDMFETMYEAPGIGLAAIQVAQPVRLITMDLVRKEGNSLTEPRAFINPEVISASEEMNVYEEGCLSIPEYYAEVERPKQVRIRYTDLDGNVKEEDADGLFATCIQHEIDHLNGVLFVDHISKLKRAMVMRKFEKAAKRGIKYV.

2 residues coordinate Fe cation: C96 and H138. The active site involves E139. H142 is a Fe cation binding site.

It belongs to the polypeptide deformylase family. The cofactor is Fe(2+).

The catalysed reaction is N-terminal N-formyl-L-methionyl-[peptide] + H2O = N-terminal L-methionyl-[peptide] + formate. Its function is as follows. Removes the formyl group from the N-terminal Met of newly synthesized proteins. Requires at least a dipeptide for an efficient rate of reaction. N-terminal L-methionine is a prerequisite for activity but the enzyme has broad specificity at other positions. The protein is Peptide deformylase of Rhodopseudomonas palustris (strain BisB18).